Consider the following 494-residue polypeptide: Glutamyl-tRNA(Gln) amidotransferase subunit A (494 aa).

Residues Lys79 and Ser159 each act as charge relay system in the active site. Residue Ser183 is the Acyl-ester intermediate of the active site.

It belongs to the amidase family. GatA subfamily. Heterotrimer of A, B and C subunits.

The enzyme catalyses L-glutamyl-tRNA(Gln) + L-glutamine + ATP + H2O = L-glutaminyl-tRNA(Gln) + L-glutamate + ADP + phosphate + H(+). Its function is as follows. Allows the formation of correctly charged Gln-tRNA(Gln) through the transamidation of misacylated Glu-tRNA(Gln) in organisms which lack glutaminyl-tRNA synthetase. The reaction takes place in the presence of glutamine and ATP through an activated gamma-phospho-Glu-tRNA(Gln). The protein is Glutamyl-tRNA(Gln) amidotransferase subunit A of Bartonella tribocorum (strain CIP 105476 / IBS 506).